The sequence spans 323 residues: L-lactate dehydrogenase 1 (323 aa).

Residues valine 17, aspartate 38, arginine 43, tyrosine 68, and 82-83 each bind NAD(+); that span reads GA. The substrate site is built by glutamine 85 and arginine 91. Residues serine 104, 121 to 123, and serine 146 each bind NAD(+); that span reads AAN. 123–126 is a binding site for substrate; it reads NPVD. Substrate is bound at residue 151–154; that stretch reads DTGR. The active-site Proton acceptor is the histidine 178. Tyrosine 223 is subject to Phosphotyrosine. Threonine 232 contacts substrate.

It belongs to the LDH/MDH superfamily. LDH family. Homotetramer.

It is found in the cytoplasm. It catalyses the reaction (S)-lactate + NAD(+) = pyruvate + NADH + H(+). It functions in the pathway fermentation; pyruvate fermentation to lactate; (S)-lactate from pyruvate: step 1/1. In terms of biological role, catalyzes the conversion of lactate to pyruvate. This chain is L-lactate dehydrogenase 1, found in Lactobacillus johnsonii (strain CNCM I-12250 / La1 / NCC 533).